The following is a 166-amino-acid chain: Disulfide bond formation protein B (166 aa).

Residues 1 to 11 are Cytoplasmic-facing; it reads MQSFAFSTRAL. Residues 12–28 form a helical membrane-spanning segment; it reads FLGLFAVCAGLLGFGLY. Over 29–46 the chain is Periplasmic; the sequence is LQHAVGLEPCPMCIMQRY. Cys-38 and Cys-41 are joined by a disulfide. Residues 47 to 63 traverse the membrane as a helical segment; it reads AFVAIALTALVAGLHGP. Residues 64-70 lie on the Cytoplasmic side of the membrane; that stretch reads GRRGTRA. Residues 71–87 traverse the membrane as a helical segment; the sequence is YAAVILLLALAGGGVAL. Residues 88 to 143 lie on the Periplasmic side of the membrane; that stretch reads RQTWMQLYPPEFAECGPDLEFMLGSFPLADALPMIFQGAGDCSKVDWAFLGLSIAN. Cysteines 102 and 129 form a disulfide. The chain crosses the membrane as a helical span at residues 144–162; the sequence is WSLVCLTLVAVFAIMMIAR. Topologically, residues 163-166 are cytoplasmic; the sequence is KRGG.

It belongs to the DsbB family.

It localises to the cell inner membrane. Required for disulfide bond formation in some periplasmic proteins. Acts by oxidizing the DsbA protein. This Aromatoleum aromaticum (strain DSM 19018 / LMG 30748 / EbN1) (Azoarcus sp. (strain EbN1)) protein is Disulfide bond formation protein B.